Consider the following 203-residue polypeptide: MRRAILLILTLTVGTSLAAGFSQKDTPINTRYRETPEEAAAREFKEHTAELPPLPDAHSDGWFDIYVDENYGKQPKILLDSLQIMPAPDGSIRYILNIRSDKGYDNLTAEGIFCARSSIGFGNGKLSSYKVFGYGDTVNSRWIQPRNAEWKPIGGTLGRNDALRAVLYQAFCEGGVPADTQGLVQRLKERAGRYAPSMKPHDK.

The N-terminal stretch at 1–18 (MRRAILLILTLTVGTSLA) is a signal peptide.

The protein belongs to the Cnp family.

It is found in the periplasm. The protein localises to the cytoplasm. The protein is Cryptic neisserial protein 1 of Neisseria gonorrhoeae (strain ATCC 700825 / FA 1090).